We begin with the raw amino-acid sequence, 173 residues long: Phosphopantetheine adenylyltransferase (173 aa).

Position 9 (Ser9) interacts with substrate. ATP contacts are provided by residues 9–10 (SF) and His17. Positions 41, 73, and 87 each coordinate substrate. Residues 88–90 (GLR), Glu98, and 123–129 (YQHLSSS) each bind ATP.

The protein belongs to the bacterial CoaD family. As to quaternary structure, homohexamer. The cofactor is Mg(2+).

It localises to the cytoplasm. It catalyses the reaction (R)-4'-phosphopantetheine + ATP + H(+) = 3'-dephospho-CoA + diphosphate. The protein operates within cofactor biosynthesis; coenzyme A biosynthesis; CoA from (R)-pantothenate: step 4/5. Reversibly transfers an adenylyl group from ATP to 4'-phosphopantetheine, yielding dephospho-CoA (dPCoA) and pyrophosphate. The polypeptide is Phosphopantetheine adenylyltransferase (Limosilactobacillus reuteri (strain DSM 20016) (Lactobacillus reuteri)).